We begin with the raw amino-acid sequence, 757 residues long: Palmitoyltransferase AKR1 (757 aa).

2 stretches are compositionally biased toward polar residues: residues 1-20 (MSDINTESGESTSLPNSTDP) and 36-46 (ESISSLQPIVS). The interval 1–54 (MSDINTESGESTSLPNSTDPPLSDVNIDVEDDDTAESISSLQPIVSNTTNPPEE) is disordered. Residues 1–307 (MSDINTESGE…KLFKKSDHAK (307 aa)) lie on the Cytoplasmic side of the membrane. ANK repeat units follow at residues 58–88 (PVLGQYHQACQKGDLATVKQLLDSGVLDLNT), 92–121 (GDITGLHWASINNRLSVVKYLISQGIDVNA), 126–155 (LEATPLHWAARYGYVHIVDCLLNKGADPTM), 159–188 (QGFNLLHLAVNSSNVMLVAYVLFFVVAKGI), 197–226 (KGRTPLLWAAYQGDSLSVMLLLKFGASTKI), and 230–259 (GGFTPLHWATVKGQPYVLTHLIRDGADFFL). The chain crosses the membrane as a helical span at residues 308 to 328 (VITFFVPLVALSIIFILFTHL). Topologically, residues 329–331 (HPL) are lumenal. Residues 332–352 (FALLISLIFGLAVNKALKELI) traverse the membrane as a helical segment. Topologically, residues 353 to 375 (LPSYSNYGLHSTSLLKSPFLSGT) are cytoplasmic. Residues 376 to 396 (FFGSLLLLTIVWIFKIAPFTI) traverse the membrane as a helical segment. The Lumenal segment spans residues 397–402 (FKSRLL). Residues 403 to 423 (TNFFMFLILMQIYYLFIKLIF) form a helical membrane-spanning segment. The Cytoplasmic segment spans residues 424-498 (SDPGCVPIET…YNDIGLKNHK (75 aa)). The 51-residue stretch at 455 to 505 (NFCLETWIRKPLRSHFSTLNTHNVARFDHFCPWIYNDIGLKNHKNFMWFIL) folds into the DHHC domain. Catalysis depends on C485, which acts as the S-palmitoyl cysteine intermediate. A helical transmembrane segment spans residues 499–519 (NFMWFILLTEVGIWFFISLTM). The Lumenal portion of the chain corresponds to 520–550 (KYFDILEDTNEDVACFLLGDDELCAGFVYDR). Residues 551-571 (FTFLIALWALIQSVWVGFLIV) form a helical membrane-spanning segment. The Cytoplasmic segment spans residues 572–757 (VQVFQTFTGV…YPEPTGPESV (186 aa)). Residues 614–647 (ELRNDDDDTAASRTGNNPNHSNGTTIPSEGSRIN) are disordered. Positions 624–646 (ASRTGNNPNHSNGTTIPSEGSRI) are enriched in polar residues.

It belongs to the DHHC palmitoyltransferase family. AKR/ZDHHC17 subfamily.

The protein resides in the early endosome membrane. Its subcellular location is the golgi apparatus membrane. It carries out the reaction L-cysteinyl-[protein] + hexadecanoyl-CoA = S-hexadecanoyl-L-cysteinyl-[protein] + CoA. In terms of biological role, palmitoyltransferase specific for casein kinase 1. In Naumovozyma castellii (Yeast), this protein is Palmitoyltransferase AKR1 (AKR1).